The sequence spans 1249 residues: Pleckstrin homology-like domain family B member 2 (1249 aa).

Disordered regions lie at residues 64–85 (QPVSAKRSPSPMGTSVRSSPSL) and 128–154 (DHYTGRDSERSTRLSEKPPYSRYSSRN). A phosphoserine mark is found at Ser71 and Ser73. Residues 74–84 (PMGTSVRSSPS) are compositionally biased toward polar residues. Residues 128–143 (DHYTGRDSERSTRLSE) show a composition bias toward basic and acidic residues. Phosphoserine occurs at positions 156, 203, 241, and 244. 2 disordered regions span residues 190–248 (SPIS…LSNM) and 264–289 (NQMSPLSLPPRSSLGNSRRGQLGEKD). Over residues 231–248 (ENVSVRTRKYSGSSLSNM) the composition is skewed to polar residues. The segment covering 267 to 283 (SPLSLPPRSSLGNSRRG) has biased composition (low complexity). 11 positions are modified to phosphoserine: Ser329, Ser333, Ser347, Ser380, Ser383, Ser389, Ser411, Ser416, Ser465, Ser486, and Ser510. Residues 388–424 (DSDLESLRQSSETPQPVLRERKSSISSISGRDDLMDY) form a disordered region. Thr546 and Thr570 each carry phosphothreonine. Coiled coils occupy residues 580–692 (TQEL…LDNC) and 718–803 (FEDL…LCNL). The tract at residues 866–934 (VSQPQSSEHF…LGQSNSCGSV (69 aa)) is disordered. The span at 873–888 (EHFRSLEERKKQHKEG) shows a compositional bias: basic and acidic residues. Thr894 carries the post-translational modification Phosphothreonine. Positions 901–919 (TPSLSPHFSSATMGRSTTP) are enriched in polar residues. Residues 1028–1094 (IARIEEMERL…QKLIEKEVKI (67 aa)) are a coiled coil. Residues 1139-1242 (EKTCRGYLIK…WMDVIVTGAE (104 aa)) form the PH domain.

As to quaternary structure, interacts with FLNC. Interacts with AMOTL2; interaction may facilitate PHLDB2 localization to the myotube podosome cortex that surrounds the core. Part of a cortical microtubule stabilization complex (CMSC) composed of KANK1, PPFIA1, PPFIBP1, ERC1/ELKS, PHLDB2/LL5beta, CLASPs, KIF21A and possibly additional interactors; within CMSCs KANK1 and PHLDB2/LL5beta appear to be the core components for targeting of microtubule-binding proteins KIF21A and CLASPs, whereas PPFIA1, PPFIBP1 and ERC1/ELKS serve as scaffolds for protein clustering. Expressed at postsynaptic membranes of skeletal neuromuscular junctions (at protein level).

It is found in the cytoplasm. It localises to the membrane. Its subcellular location is the cell projection. The protein resides in the podosome. The protein localises to the cell cortex. In terms of biological role, seems to be involved in the assembly of the postsynaptic apparatus. May play a role in acetyl-choline receptor (AChR) aggregation in the postsynaptic membrane. The chain is Pleckstrin homology-like domain family B member 2 (Phldb2) from Mus musculus (Mouse).